Here is a 2877-residue protein sequence, read N- to C-terminus: Desmoplakin (2877 aa).

The interval 1–20 (MSCNGGSHPRINTLGRMTRA) is disordered. Residues 1–591 (MSCNGGSHPR…DYMKTIEDLE (591 aa)) form an interaction with PKP1, JUP, PKP2 region. A globular 1 region spans residues 1 to 1063 (MSCNGGSHPR…ANSENCNKNK (1063 aa)). 2 positions are modified to phosphoserine: serine 22 and serine 62. Tyrosine 65 carries the phosphotyrosine modification. Threonine 70 carries the phosphothreonine modification. Residues serine 174, serine 175, and serine 183 each carry the phosphoserine modification. Spectrin repeat units follow at residues 185–278 (SGWD…HLRQ) and 279–382 (LQNI…LKEN). One copy of the Spectrin 3a repeat lies at 383–453 (AAYFQFFEEA…NLVNKSKKIV (71 aa)). The SH3 domain maps to 465–522 (NKPIILRALCDYKQDQKIVHKGDECILKDNNERSKWYVTGPGGVDMLVPSVGLIIPPP). The Spectrin 3b repeat unit spans residues 523 to 552 (NPLAVDLSCKIEQYYEAILALWNQLYINMK). Spectrin repeat units follow at residues 553 to 634 (SLVS…IQLP), 661 to 776 (VIET…SLCS), and 777 to 890 (VRAL…DLEK). Coiled-coil stretches lie at residues 1034–1280 (LKLK…AEEN), 1313–1354 (NARH…YENE), 1395–1443 (TSGY…QKAS), and 1473–1926 (KQSL…KLED). The segment at 1064 to 1952 (FLDQNLQKYQ…QKEIDKLRQR (889 aa)) is central fibrous rod domain. A phosphoserine mark is found at serine 1665, serine 1715, and serine 2031. Positions 1953–2877 (PYGSHRETQT…YSFSSSSIGY (925 aa)) are globular 2. The 4.5 X 38 AA tandem repeats (Domain A) stretch occupies residues 1967-2215 (TVDSSKLVFD…LLLSVQKRSM (249 aa)). Plectin repeat units follow at residues 2016-2052 (QPFL…PEST), 2053-2090 (VMLL…FDDR), 2091-2128 (QQIY…RETG), 2129-2166 (MRLL…RDLY), 2170-2204 (NDPR…PHTG), 2205-2240 (LLLL…PSTV), 2258-2295 (KDFL…PGTA), 2296-2333 (LELL…IEFK), 2334-2371 (EKLL…KGHG), 2372-2409 (IRLL…EELS), 2413-2447 (SDPS…EETG), 2463-2500 (SQKN…YETF), 2514-2551 (TITG…RKFF), 2617-2654 (SDPL…SITG), 2655-2692 (QRLL…QDMA), 2731-2768 (QRFL…GRAA), and 2769-2806 (QRLQ…DITG). Serine 2214, serine 2216, and serine 2232 each carry phosphoserine. A 4.5 X 38 AA tandem repeats (Domain B) region spans residues 2251 to 2453 (DEVGERIKDF…EETGLCLLPL (203 aa)). One copy of the LRR 15 repeat lies at 2603–2628 (ISSVRNLTIRSSSLSDPLEESSPIAA). The segment at 2616–2828 (LSDPLEESSP…GLPSPYNMSA (213 aa)) is 4.5 X 38 AA tandem repeats (Domain C). A phosphoserine mark is found at serine 2817 and serine 2822. The interval 2817-2877 (SKGLPSPYNM…YSFSSSSIGY (61 aa)) is disordered. Phosphotyrosine is present on tyrosine 2824. Residues serine 2827 and serine 2831 each carry the phosphoserine modification. A 6 X 4 AA tandem repeats of G-S-R-[SR] region spans residues 2830-2853 (GSRSGSRSGSRSGSRSGSRSGSRR). Positions 2830–2853 (GSRSGSRSGSRSGSRSGSRSGSRR) are enriched in low complexity. Residues arginine 2832 and arginine 2853 each carry the omega-N-methylarginine modification. Serine 2855 is subject to Phosphoserine. The residue at position 2859 (threonine 2859) is a Phosphothreonine. Positions 2862-2877 (SSYSYSYSFSSSSIGY) are enriched in low complexity. Phosphoserine is present on serine 2874.

This sequence belongs to the plakin or cytolinker family. As to quaternary structure, homodimer. Interacts with COL17A1 (via cytoplasmic region). Interacts with DSC2. Interacts with PKP1. Interacts with PKP2. Interacts weakly with TMEM65. Phosphorylation at Ser-2855 increases association with intermediate filament cytokeratin, potentially facilitating interaction between desmosome junctions and intermediate filament architecture. As to expression, expressed in cardiomyocytes (at protein level).

Its subcellular location is the cell junction. It is found in the desmosome. The protein resides in the cell membrane. The protein localises to the cytoplasm. Its function is as follows. Major high molecular weight protein of desmosomes. Regulates profibrotic gene expression in cardiomyocytes via activation of the MAPK14/p38 MAPK signaling cascade and increase in TGFB1 protein abundance. The sequence is that of Desmoplakin from Rattus norvegicus (Rat).